A 360-amino-acid chain; its full sequence is 3-dehydroquinate synthase (360 aa).

Residues 70-75 (DGEKYK), 104-108 (GVIGD), 128-129 (TT), K141, and K150 each bind NAD(+). 3 residues coordinate Zn(2+): E183, H246, and H263.

It belongs to the sugar phosphate cyclases superfamily. Dehydroquinate synthase family. Co(2+) serves as cofactor. The cofactor is Zn(2+). Requires NAD(+) as cofactor.

Its subcellular location is the cytoplasm. The catalysed reaction is 7-phospho-2-dehydro-3-deoxy-D-arabino-heptonate = 3-dehydroquinate + phosphate. It functions in the pathway metabolic intermediate biosynthesis; chorismate biosynthesis; chorismate from D-erythrose 4-phosphate and phosphoenolpyruvate: step 2/7. Functionally, catalyzes the conversion of 3-deoxy-D-arabino-heptulosonate 7-phosphate (DAHP) to dehydroquinate (DHQ). This chain is 3-dehydroquinate synthase, found in Acinetobacter baumannii (strain AYE).